Reading from the N-terminus, the 476-residue chain is Protein Cep89 homolog (476 aa).

Disordered regions lie at residues 1 to 29 (MSTRNVMITDLDQPDPNQQQHHQNPKKNR) and 172 to 193 (LGEGAPTCGGSTKVSSSSAPYP). Over residues 180-190 (GGSTKVSSSSA) the composition is skewed to polar residues.

The protein localises to the cytoplasm. The protein resides in the cytosol. Its subcellular location is the mitochondrion intermembrane space. Functionally, required for mitochondrial complex IV activity. May be involved in non-associative learning. In Drosophila melanogaster (Fruit fly), this protein is Protein Cep89 homolog (Cep89).